We begin with the raw amino-acid sequence, 801 residues long: Quinoprotein glucose dehydrogenase A (801 aa).

Residues 1–33 form the signal peptide; sequence MNQPTSRSGLTTFTVIIIGLLALFLLIGGIWLA. Helical transmembrane passes span 39–55, 59–79, 94–108, and 119–138; these read IYYIIAGVLLLIVAWQL, ASTALWFYAALMLGTIIWSVW, ILGILGLWLLVPAVT, and VALSSTLAIAIVLMVYSIFN. The active-site Proton acceptor is Asp-471.

The protein belongs to the bacterial PQQ dehydrogenase family. In terms of assembly, monomer. Pyrroloquinoline quinone serves as cofactor.

The protein resides in the cell inner membrane. It carries out the reaction D-glucose + A = D-glucono-1,5-lactone + AH2. Catalyzes an exceptionally high rate of oxidation of a wide range of aldose sugars, including D-glucose, galactose, arabinose and xylose, and also the disaccharides lactose, cellobiose and maltose. The protein is Quinoprotein glucose dehydrogenase A (gdhA) of Acinetobacter calcoaceticus.